We begin with the raw amino-acid sequence, 415 residues long: D-galactonate dehydratase family member RspA (415 aa).

The substrate site is built by Asn48 and His133. Tyr170 (proton donor/acceptor) is an active-site residue. Asp223 is a Mg(2+) binding site. The Proton donor/acceptor role is filled by His225. Positions 249 and 275 each coordinate Mg(2+). Substrate-binding residues include Glu275, Arg296, His325, Asp329, and Glu352.

Belongs to the mandelate racemase/muconate lactonizing enzyme family. GalD subfamily. Requires Mg(2+) as cofactor.

It carries out the reaction D-mannonate = 2-dehydro-3-deoxy-D-gluconate + H2O. Its function is as follows. Has low D-mannonate dehydratase activity (in vitro), suggesting that this is not a physiological substrate and that it has no significant role in D-mannonate degradation in vivo. Has no detectable activity with a panel of 70 other acid sugars (in vitro). This chain is D-galactonate dehydratase family member RspA (rspA), found in Escherichia coli (strain MS 21-1).